The chain runs to 469 residues: Glutamine synthetase (469 aa).

A GS beta-grasp domain is found at glutamate 15 to threonine 96. Residues proline 104–valine 469 form the GS catalytic domain. The Mg(2+) site is built by glutamate 129 and glutamate 131. Position 205 (glutamate 205) interacts with ATP. Mg(2+) is bound by residues glutamate 210 and glutamate 218. Residue tyrosine 221–phenylalanine 223 coordinates ATP. L-glutamate contacts are provided by residues asparagine 262–glycine 263 and glycine 263. Histidine 267 is a binding site for Mg(2+). Residues histidine 269–serine 271 and serine 271 contribute to the ATP site. Arginine 320, glutamate 326, and arginine 338 together coordinate L-glutamate. ATP-binding residues include arginine 338, arginine 343, and lysine 352. Glutamate 357 contributes to the Mg(2+) binding site. Arginine 359 contacts L-glutamate. At tyrosine 397 the chain carries O-AMP-tyrosine.

This sequence belongs to the glutamine synthetase family. In terms of assembly, oligomer of 12 subunits arranged in the form of two hexagons. The cofactor is Mg(2+).

Its subcellular location is the cytoplasm. The enzyme catalyses L-glutamate + NH4(+) + ATP = L-glutamine + ADP + phosphate + H(+). Its activity is regulated as follows. The activity of this enzyme could be controlled by adenylation under conditions of abundant glutamine. Its function is as follows. Catalyzes the ATP-dependent biosynthesis of glutamine from glutamate and ammonia. Complements L-glutamine auxotrophy of an E.coli glnA mutant. The polypeptide is Glutamine synthetase (Streptomyces coelicolor (strain ATCC BAA-471 / A3(2) / M145)).